The following is a 455-amino-acid chain: Protein YmfN (455 aa).

It belongs to the phage terminase family.

This chain is Protein YmfN (ymfN), found in Escherichia coli (strain K12).